The chain runs to 69 residues: Cytochrome b-c1 complex subunit 6 (69 aa).

Intrachain disulfides connect cysteine 17/cysteine 59 and cysteine 31/cysteine 45.

This sequence belongs to the UQCRH/QCR6 family. Component of the ubiquinol-cytochrome c oxidoreductase (cytochrome b-c1 complex, complex III, CIII), a multisubunit enzyme composed of 3 respiratory subunits cytochrome b, cytochrome c1 and Rieske protein, 2 core protein subunits, and additional low-molecular weight protein subunits. The complex exists as an obligatory dimer and forms supercomplexes (SCs) in the inner mitochondrial membrane with cytochrome c oxidase (complex IV, CIV).

The protein resides in the mitochondrion inner membrane. Component of the ubiquinol-cytochrome c oxidoreductase, a multisubunit transmembrane complex that is part of the mitochondrial electron transport chain which drives oxidative phosphorylation. The respiratory chain contains 3 multisubunit complexes succinate dehydrogenase (complex II, CII), ubiquinol-cytochrome c oxidoreductase (cytochrome b-c1 complex, complex III, CIII) and cytochrome c oxidase (complex IV, CIV), that cooperate to transfer electrons derived from NADH and succinate to molecular oxygen, creating an electrochemical gradient over the inner membrane that drives transmembrane transport and the ATP synthase. The cytochrome b-c1 complex catalyzes electron transfer from ubiquinol to cytochrome c, linking this redox reaction to translocation of protons across the mitochondrial inner membrane, with protons being carried across the membrane as hydrogens on the quinol. In the process called Q cycle, 2 protons are consumed from the matrix, 4 protons are released into the intermembrane space and 2 electrons are passed to cytochrome c. This is Cytochrome b-c1 complex subunit 6 from Solanum tuberosum (Potato).